A 426-amino-acid polypeptide reads, in one-letter code: Tyrosine--tRNA ligase (426 aa).

Y35 serves as a coordination point for L-tyrosine. The 'HIGH' region signature appears at 40–49; sequence PTADSLHIGH. L-tyrosine-binding residues include Y172 and Q176. Positions 232–236 match the 'KMSKS' region motif; it reads KLGKS. An ATP-binding site is contributed by K235. Positions 357-414 constitute an S4 RNA-binding domain; the sequence is ENIKDILVNSKLSKSKNNAKSVILSSSIRINNKKQKSIDFMFKKEDKLFNLFTLIKKG.

Belongs to the class-I aminoacyl-tRNA synthetase family. TyrS type 1 subfamily. As to quaternary structure, homodimer.

The protein localises to the cytoplasm. The catalysed reaction is tRNA(Tyr) + L-tyrosine + ATP = L-tyrosyl-tRNA(Tyr) + AMP + diphosphate + H(+). In terms of biological role, catalyzes the attachment of tyrosine to tRNA(Tyr) in a two-step reaction: tyrosine is first activated by ATP to form Tyr-AMP and then transferred to the acceptor end of tRNA(Tyr). The chain is Tyrosine--tRNA ligase from Wigglesworthia glossinidia brevipalpis.